Here is a 96-residue protein sequence, read N- to C-terminus: MRKYEIMYIIRPGVEEEAQKALVERFAGVLTNNGAEIINTKEWGKRRLAYEINDLREGFYMILNVNSNSEAINEFDRLAKINEDILRHIVVKEEEK.

This sequence belongs to the bacterial ribosomal protein bS6 family.

Its function is as follows. Binds together with bS18 to 16S ribosomal RNA. In Bacillus mycoides (strain KBAB4) (Bacillus weihenstephanensis), this protein is Small ribosomal subunit protein bS6.